Here is a 189-residue protein sequence, read N- to C-terminus: Glucose-6-phosphate isomerase (189 aa).

H88, H90, E97, and H136 together coordinate Fe cation.

Belongs to the archaeal-type GPI family. In terms of assembly, homodimer. Fe cation is required as a cofactor.

It is found in the cytoplasm. The enzyme catalyses alpha-D-glucose 6-phosphate = beta-D-fructose 6-phosphate. It participates in carbohydrate degradation; glycolysis; D-glyceraldehyde 3-phosphate and glycerone phosphate from D-glucose: step 2/4. The chain is Glucose-6-phosphate isomerase (pgiA) from Pyrococcus horikoshii (strain ATCC 700860 / DSM 12428 / JCM 9974 / NBRC 100139 / OT-3).